The chain runs to 329 residues: Porphobilinogen deaminase (329 aa).

Cys-253 carries the post-translational modification S-(dipyrrolylmethanemethyl)cysteine.

Belongs to the HMBS family. As to quaternary structure, monomer. Dipyrromethane is required as a cofactor.

It carries out the reaction 4 porphobilinogen + H2O = hydroxymethylbilane + 4 NH4(+). Functionally, tetrapolymerization of the monopyrrole PBG into the hydroxymethylbilane pre-uroporphyrinogen in several discrete steps. The sequence is that of Porphobilinogen deaminase from Leifsonia xyli subsp. xyli (strain CTCB07).